A 391-amino-acid polypeptide reads, in one-letter code: Zinc finger protein DPF3 (391 aa).

A compositionally biased stretch (acidic residues) spans 152–165 (ENGDGFHDDEDFEV). 2 disordered regions span residues 152–200 (ENGD…PYVC) and 236–266 (LAEEEGEEERETEIPQSPPVHHENHKPQKAP). Over residues 169–183 (KRKHRNKGRGRGSGR) the composition is skewed to basic residues. Residues 198–235 (YVCDNRYKQKHNSKTADSVCGKRYKNRPGLSYHYAHTH) form a C2H2-type zinc finger. 2 PHD-type zinc fingers span residues 273–333 (NDYC…CKSC) and 330–380 (CKSC…CQNL).

Component of the BAF complex. Interacts with acetylated histones H3 and H4. Component of neuron-specific chromatin remodeling complex (nBAF complex), a subfamily of ATP-dependent SWI/SNF chromatin remodeling complexes. As to expression, expressed in the heart and somites.

The protein localises to the nucleus. In terms of biological role, muscle-specific component of the BAF complex, a multiprotein complex involved in transcriptional activation and repression of select genes by chromatin remodeling (alteration of DNA-nucleosome topology). Specifically binds acetylated lysines on histone 3 and 4. In the complex, it acts as a tissue-specific anchor between histone acetylations and methylations and chromatin remodeling. Belongs to the neuron-specific chromatin remodeling complex (nBAF complex) and may play a role in neural development. Plays an essential role in heart and skeletal muscle development. The polypeptide is Zinc finger protein DPF3 (dpf3) (Danio rerio (Zebrafish)).